The primary structure comprises 238 residues: Protein shisa-3 homolog (238 aa).

Positions 1–21 (MGALLAFCLLVGLLRWGPAGA) are cleaved as a signal peptide. Topologically, residues 22–98 (QQPGEYCHGW…GITAQPVYVP (77 aa)) are lumenal. Residues 99 to 119 (FLIVGSIFIAFIILGSLVAIY) traverse the membrane as a helical segment. Residues 120-238 (CCTCLRPKEP…GKSCPDFSSS (119 aa)) lie on the Cytoplasmic side of the membrane.

The protein belongs to the shisa family.

It localises to the endoplasmic reticulum membrane. Plays an essential role in the maturation of presomitic mesoderm cells by individual attenuation of both FGF and WNT signaling. This Mus musculus (Mouse) protein is Protein shisa-3 homolog (Shisa3).